We begin with the raw amino-acid sequence, 283 residues long: K88 fimbrial protein AC (283 aa).

Residues 1-21 (MKKTLIALAIAASAASGMAHA) form the signal peptide.

This sequence belongs to the fimbrial K88 protein family. In terms of assembly, K88 fimbria, 0.1-1 micrometer in length and 7 nanometers in diameter, is composed of about 100 identical subunits.

The protein localises to the fimbrium. In terms of biological role, K88 major fimbrial subunit. Fimbriae (also called pili), are polar filaments radiating from the surface of the bacterium to a length of 0.5-1.5 micrometers and numbering 100-300 per cell. They enable bacteria to colonize the epithelium of specific host organs. In Escherichia coli, this protein is K88 fimbrial protein AC (faeG).